The following is a 1624-amino-acid chain: NAD-specific glutamate dehydrogenase (1624 aa).

K845 is an active-site residue.

This sequence belongs to the Glu/Leu/Phe/Val dehydrogenases family. As to quaternary structure, interacts with (unphosphorylated) GarA.

It carries out the reaction L-glutamate + NAD(+) + H2O = 2-oxoglutarate + NH4(+) + NADH + H(+). Activity is inhibited by unphosphorylated GarA. Catalyzes the reversible conversion of L-glutamate to 2-oxoglutarate. This Mycobacterium tuberculosis (strain ATCC 25618 / H37Rv) protein is NAD-specific glutamate dehydrogenase (gdh).